Here is a 534-residue protein sequence, read N- to C-terminus: Signal recognition particle subunit SRP54 (534 aa).

A G-domain region spans residues 1 to 296 (MVLQDLGRRI…EPKAFIQKLL (296 aa)). GTP contacts are provided by residues 109 to 116 (GLQGAGKT), 191 to 195 (DTSGR), and 249 to 252 (TKTD). An M-domain region spans residues 297–534 (GMGDMAGLVE…GGGGGRGRGR (238 aa)).

Belongs to the GTP-binding SRP family. SRP54 subfamily. As to quaternary structure, fungal signal recognition particle consists of a 7S RNA molecule (scR1) and at least six protein subunits: srp72, srp68, srpA/srp54, sec65, srp21 and srp14.

It is found in the cytoplasm. It localises to the endoplasmic reticulum. It carries out the reaction GTP + H2O = GDP + phosphate + H(+). Functionally, signal-recognition-particle (SRP) assembly has a crucial role in targeting secretory proteins to the rough endoplasmic reticulum (ER) membrane. SRP is required for the cotranslational protein translocation for ER import and preferentially recognizes strongly hydrophobic signal sequences. It is involved in targeting the nascent chain-ribosome (RNC) complex to the ER and is proposed to participate in the arrest of nascent chain elongation during membrane targeting. srpA/srp54 binds to the signal sequence of presecretory protein when they emerge from the ribosomes. srpA/srp54 interacts with the scR1 RNA and mediates the association of the resulting SRP-RNC complex with the signal recognition particle receptor (SR) via its alpha subunit srp101. Both, srpA/srp54 and srp101, are locked in their GTP bound forms in the SRP-RNC-SR complex, which dissociates upon transferring the signal sequence to the protein-conducting channel (translocon). After signal sequence transfer, srpA/srp54 and srp101 act as reciprocal GTPase-activating proteins (GAPs), thereby resolving their association. This chain is Signal recognition particle subunit SRP54 (srpA), found in Aspergillus niger.